Here is a 440-residue protein sequence, read N- to C-terminus: tRNA(Ile)-lysidine synthase (440 aa).

ATP is bound at residue 31–36; it reads SGGADS.

This sequence belongs to the tRNA(Ile)-lysidine synthase family.

It localises to the cytoplasm. The enzyme catalyses cytidine(34) in tRNA(Ile2) + L-lysine + ATP = lysidine(34) in tRNA(Ile2) + AMP + diphosphate + H(+). Ligates lysine onto the cytidine present at position 34 of the AUA codon-specific tRNA(Ile) that contains the anticodon CAU, in an ATP-dependent manner. Cytidine is converted to lysidine, thus changing the amino acid specificity of the tRNA from methionine to isoleucine. The chain is tRNA(Ile)-lysidine synthase from Borrelia garinii subsp. bavariensis (strain ATCC BAA-2496 / DSM 23469 / PBi) (Borreliella bavariensis).